Reading from the N-terminus, the 341-residue chain is KH domain-containing RNA-binding protein QKI (341 aa).

The qua1 domain; involved in homodimerization stretch occupies residues 11 to 82; that stretch reads PKPTPDYLMQ…PDAVGPIVQL (72 aa). Positions 87–153 constitute a KH domain; it reads YVPVKEYPDF…WEHLNEDLHV (67 aa). The tract at residues 182 to 213 is qua2 domain; involved in RNA binding; it reads AAEGEDSLKKMQLMELAILNGTYRDANIKSPA. Ser-188 is subject to Phosphoserine. An Omega-N-methylarginine modification is found at Arg-227. Position 242 is an asymmetric dimethylarginine; by CARM1; alternate (Arg-242). Omega-N-methylarginine; alternate is present on Arg-242. Arg-256 carries the post-translational modification Omega-N-methylarginine. The SH3-binding motif lies at 276-279; it reads PPGP. The Nuclear localization signal motif lies at 324 to 330; sequence RVHPYQR.

This sequence belongs to the quaking family. Homodimer; does not require RNA to homodimerize. Able to heterodimerize with BICC1. Methylated by PRMT1. In terms of processing, tyrosine phosphorylated at its C-terminus, probably by FYN. Phosphorylation leads to decreased mRNA-binding affinity, affecting transport and/or stabilization of MBP mRNA. Post-translationally, ubiquitinated by RNF6 in macrophages, leading to its degradation.

It localises to the nucleus. The protein localises to the cytoplasm. In terms of biological role, RNA reader protein, which recognizes and binds specific RNAs, thereby regulating RNA metabolic processes, such as pre-mRNA splicing, circular RNA (circRNA) formation, mRNA export, mRNA stability and/or translation. Involved in various cellular processes, such as mRNA storage into stress granules, apoptosis, lipid deposition, interferon response, glial cell fate and development. Binds to the 5'-NACUAAY-N(1,20)-UAAY-3' RNA core sequence. Acts as a mRNA modification reader that specifically recognizes and binds mRNA transcripts modified by internal N(7)-methylguanine (m7G). Promotes the formation of circular RNAs (circRNAs) during the epithelial to mesenchymal transition and in cardiomyocytes: acts by binding to sites flanking circRNA-forming exons. CircRNAs are produced by back-splicing circularization of pre-mRNAs. Plays a central role in myelinization via 3 distinct mechanisms. First, acts by protecting and promoting stability of target mRNAs such as MBP, SIRT2 and CDKN1B, which promotes oligodendrocyte differentiation. Second, participates in mRNA transport by regulating the nuclear export of MBP mRNA. Finally, indirectly regulates mRNA splicing of MAG pre-mRNA during oligodendrocyte differentiation by acting as a negative regulator of MAG exon 12 alternative splicing: acts by binding to HNRNPA1 mRNA splicing factor, preventing its translation. Involved in microglia differentiation and remyelination by regulating microexon alternative splicing of the Rho GTPase pathway. Involved in macrophage differentiation: promotes monocyte differentiation by regulating pre-mRNA splicing in naive peripheral blood monocytes. Acts as an important regulator of muscle development: required for the contractile function of cardiomyocytes by regulating alternative splicing of cardiomyocyte transcripts. Acts as a negative regulator of thermogenesis by decreasing stability, nuclear export and translation of mRNAs encoding PPARGC1A and UCP1. Also required for visceral endoderm function and blood vessel development. May also play a role in smooth muscle development. In addition to its RNA-binding activity, also acts as a nuclear transcription coactivator for SREBF2/SREBP2. This Bos taurus (Bovine) protein is KH domain-containing RNA-binding protein QKI.